Consider the following 700-residue polypeptide: Sex comb on midleg-like protein 2 (700 aa).

A disordered region spans residues 1–33 (MGQTVNEDSMDVKKENQEKTPQSSTSSVQRDDF). Residues 19–28 (KTPQSSTSSV) are compositionally biased toward polar residues. MBT repeat units follow at residues 33–131 (FHWE…LQPP) and 139–240 (SSWP…LQPP). Residues 253 to 281 (TESSPSEASQHSMQSPQKTTLILPTQQVR) are compositionally biased toward polar residues. Disordered regions lie at residues 253 to 320 (TESS…EKPL) and 466 to 550 (PFSS…SSLN). Ser-256, Ser-261, Ser-267, Ser-299, and Ser-300 each carry phosphoserine. Thr-305 is modified (phosphothreonine). The span at 476-495 (SSAEHDKNQSAKEDVTERQS) shows a compositional bias: basic and acidic residues. Ser-499 is subject to Phosphoserine. Thr-503 is modified (phosphothreonine). Ser-511 is subject to Phosphoserine. Lys-518 is covalently cross-linked (Glycyl lysine isopeptide (Lys-Gly) (interchain with G-Cter in SUMO2)). Ser-522 carries the post-translational modification Phosphoserine. Residues 535-545 (PKEENLSEDSK) show a composition bias toward basic and acidic residues. Lys-536 participates in a covalent cross-link: Glycyl lysine isopeptide (Lys-Gly) (interchain with G-Cter in SUMO2). Ser-570, Ser-583, Ser-590, and Ser-594 each carry phosphoserine. Positions 575–584 (RSVPGTTSSP) are enriched in polar residues. The interval 575 to 594 (RSVPGTTSSPLVGDISPKSS) is disordered. Residues Lys-599 and Lys-605 each participate in a glycyl lysine isopeptide (Lys-Gly) (interchain with G-Cter in SUMO2) cross-link. The SAM domain maps to 631–700 (WSVDEVIQFM…IEKLKEGKYS (70 aa)).

The protein belongs to the SCM family. As to expression, highly expressed in placenta, thymus and testis. Detected at lower levels in brain, liver, skeletal muscle, pancreas and ovary.

It localises to the nucleus. In terms of biological role, putative Polycomb group (PcG) protein. PcG proteins act by forming multiprotein complexes, which are required to maintain the transcriptionally repressive state of homeotic genes throughout development. The chain is Sex comb on midleg-like protein 2 (SCML2) from Homo sapiens (Human).